A 555-amino-acid polypeptide reads, in one-letter code: Urocanate hydratase (555 aa).

NAD(+) contacts are provided by residues 51–52, Gln129, 175–177, Glu195, 262–266, 272–273, and Tyr321; these read GG, GMG, QTSAH, and YL. The active site involves Cys409. Gly491 lines the NAD(+) pocket.

It belongs to the urocanase family. Requires NAD(+) as cofactor.

It localises to the cytoplasm. It carries out the reaction 4-imidazolone-5-propanoate = trans-urocanate + H2O. Its pathway is amino-acid degradation; L-histidine degradation into L-glutamate; N-formimidoyl-L-glutamate from L-histidine: step 2/3. Functionally, catalyzes the conversion of urocanate to 4-imidazolone-5-propionate. In Xanthomonas euvesicatoria pv. vesicatoria (strain 85-10) (Xanthomonas campestris pv. vesicatoria), this protein is Urocanate hydratase.